The chain runs to 472 residues: MAKSLFQKVWDAHTVRKLANGQTQLLIGTHLIHEVTSPQAFGMLRDLGLKVAFPQRTFATVDHIVPTDQVVEPYRDPLAQAMMDELRKNCAEFGITFFDRSTGKQGIVHIVGPEQGITQPGTTIACGDSHTSTHGAFGAIAFGIGTSQVRDVLATQTMALGPLKVRRIEVNGKLRPGVYAKDVILHIIRTLGVNGGTGFAYEYAGEVFDRFSMEERMTVCNMSIEGGARVGYVNPDDTTFTYLKGRPYAPKGAAWDEAVTRWRAVASDSGCRYDDVVKINAADIAPTVTWGINPGQGISINEQIPDPAKATDADEKANIEEALAYMKLQPGAPIKGTKINVAFLGSCTNGRLSDFQEVAKFVKGKRVAAGVKAIAVPGSQIVALQCEKLGLDKILSEAGFEWRAAGCSMCLAMNPDKLIGDQLCASSSNRNFKGRQGSPTGRTILMSPLMVAAAAVTGQVADAREVFGVSAN.

Residues cysteine 347, cysteine 407, and cysteine 410 each contribute to the [4Fe-4S] cluster site.

This sequence belongs to the aconitase/IPM isomerase family. LeuC type 1 subfamily. Heterodimer of LeuC and LeuD. [4Fe-4S] cluster is required as a cofactor.

The enzyme catalyses (2R,3S)-3-isopropylmalate = (2S)-2-isopropylmalate. The protein operates within amino-acid biosynthesis; L-leucine biosynthesis; L-leucine from 3-methyl-2-oxobutanoate: step 2/4. Functionally, catalyzes the isomerization between 2-isopropylmalate and 3-isopropylmalate, via the formation of 2-isopropylmaleate. The sequence is that of 3-isopropylmalate dehydratase large subunit from Opitutus terrae (strain DSM 11246 / JCM 15787 / PB90-1).